The chain runs to 657 residues: Glycogen debranching enzyme (657 aa).

Asp-336 (nucleophile) is an active-site residue. Glu-371 serves as the catalytic Proton donor. The tract at residues 460–479 (ANGEENRDGTNNNYSNNHGK) is disordered.

It belongs to the glycosyl hydrolase 13 family.

The enzyme catalyses Hydrolysis of (1-&gt;6)-alpha-D-glucosidic linkages to branches with degrees of polymerization of three or four glucose residues in limit dextrin.. The protein operates within glycan degradation; glycogen degradation. In terms of biological role, removes maltotriose and maltotetraose chains that are attached by 1,6-alpha-linkage to the limit dextrin main chain, generating a debranched limit dextrin. The sequence is that of Glycogen debranching enzyme from Escherichia coli (strain UTI89 / UPEC).